The sequence spans 419 residues: eIF5-mimic protein 1 (419 aa).

A disordered region spans residues 1–22; that stretch reads MNKHQKPVLTGQRFKTRKRDEK. K117 carries the post-translational modification N6-acetyllysine. The W2 domain occupies 248–415; the sequence is VQQSLGTRKE…QNAEEESESE (168 aa). Phosphoserine is present on residues S412, S414, and S419.

The protein belongs to the BZW family. As to quaternary structure, interacts with EIF3E, EIF2S2 and EIF3C. Expressed at high levels in heart, and at lower levels in skeletal muscle, spleen and lung. Expressed at low levels in brain regions where nascent and immature neurons are present.

It localises to the cytoplasm. Translation initiation regulator which represses non-AUG initiated translation and repeat-associated non-AUG (RAN) initiated translation by acting as a competitive inhibitor of eukaryotic translation initiation factor 5 (EIF5) function. Increases the accuracy of translation initiation by impeding EIF5-dependent translation from non-AUG codons by competing with it for interaction with EIF2S2 within the 43S pre-initiation complex (PIC) in an EIF3C-binding dependent manner. The polypeptide is eIF5-mimic protein 1 (Bzw2) (Rattus norvegicus (Rat)).